An 873-amino-acid polypeptide reads, in one-letter code: Bifunctional heparan sulfate N-deacetylase/N-sulfotransferase 3 (873 aa).

Topologically, residues Met1–Arg13 are cytoplasmic. A helical; Signal-anchor for type II membrane protein transmembrane segment spans residues Thr14–Tyr34. Over Ser35–Arg873 the chain is Lumenal. The tract at residues Gly36–Glu589 is heparan sulfate N-deacetylase 3. Asn146, Asn226, Asn342, and Asn392 each carry an N-linked (GlcNAc...) asparagine glycan. The interval Lys590–Arg873 is heparan sulfate N-sulfotransferase 3. The active-site For sulfotransferase activity is the Lys605. Lys605–Thr609 lines the 3'-phosphoadenylyl sulfate pocket. Residue Asn658 is glycosylated (N-linked (GlcNAc...) asparagine). Ser703 is a binding site for 3'-phosphoadenylyl sulfate. Asn794 carries N-linked (GlcNAc...) asparagine glycosylation. Residues Cys809 and Cys819 are joined by a disulfide bond. Lys824–Tyr828 is a 3'-phosphoadenylyl sulfate binding site.

It belongs to the sulfotransferase 1 family. NDST subfamily. Monomer. In terms of tissue distribution, expressed in brain, kidney, liver, fetal and adult lung, adult pancreas, placenta, fetal spleen and fetal thymus. Not detected in adult/ fetal heart and skeletal muscle.

The protein localises to the golgi apparatus membrane. The catalysed reaction is alpha-D-glucosaminyl-[heparan sulfate](n) + 3'-phosphoadenylyl sulfate = N-sulfo-alpha-D-glucosaminyl-[heparan sulfate](n) + adenosine 3',5'-bisphosphate + 2 H(+). It participates in glycan metabolism; heparan sulfate biosynthesis. It functions in the pathway glycan metabolism; heparin biosynthesis. In terms of biological role, essential bifunctional enzyme that catalyzes both the N-deacetylation and the N-sulfation of glucosamine (GlcNAc) of the glycosaminoglycan in heparan sulfate. Modifies the GlcNAc-GlcA disaccharide repeating sugar backbone to make N-sulfated heparosan, a prerequisite substrate for later modifications in heparin biosynthesis. Has high deacetylase activity but low sulfotransferase activity. This Homo sapiens (Human) protein is Bifunctional heparan sulfate N-deacetylase/N-sulfotransferase 3.